The chain runs to 438 residues: MESMNVKYPVEYLIEHLNSFESPEVAVESLRKEGIMCKNRGDLYMFKYHLGCKFDKIYHLACRGAILRKTDSGWKVLSYPFDKFFNWGEELQPEIVNYYQTLRYASPLNEKRKAGFMFKLPMKLVEKLDGTCVVLYYDEGWKIHTLGSIDANGSIVKNGMVTTHMDKTYRELFWETFEKKYPPYLLYHLNSSYCYIFEMVHPDARVVVPYEEPNIILIGVRSVDPEKGYFEVGPSEEAVRIFNESGGKINLKLPAVLSQEQNYTLFRANRLQELFEEVTPLFKSLRDGYEVVYEGFVAVQEIAPRVYYRTKIKHPVYLELHRIKTTITPEKLADLFLENKLDDFVLTPDEQETVMKLKEIYTDMRNQLESSFDTIYKEISEQVSPEENPGEFRKRFALRLMDYHDKSWFFARLDGDEEKMQKSEKKLLTERIEKGLFK.

Residues Y48, R63, and K83 each contribute to the ATP site. K127 functions as the N6-AMP-lysine intermediate in the catalytic mechanism. The ATP site is built by E198, K311, and K313. A Mg(2+)-binding site is contributed by D342.

The cofactor is Mg(2+). Mn(2+) is required as a cofactor.

Its function is as follows. Involved in countering a host defense mechanism which, following viral infection, activates the host induced anticodon nuclease and shuts off viral translation. Repairs 5'-PO4 and 3'-OH groups in the cleaved host tRNA. This is RNA ligase from Rhodothermus phage RM378 (Bacteriophage RM378).